We begin with the raw amino-acid sequence, 392 residues long: Phosphoglycerate kinase (392 aa).

Residues 21-23 (DFN), R36, 59-62 (HLGR), R118, and R151 contribute to the substrate site. ATP contacts are provided by residues K201, G292, E323, and 349–352 (GGDS).

The protein belongs to the phosphoglycerate kinase family. Monomer.

It is found in the cytoplasm. The enzyme catalyses (2R)-3-phosphoglycerate + ATP = (2R)-3-phospho-glyceroyl phosphate + ADP. The protein operates within carbohydrate degradation; glycolysis; pyruvate from D-glyceraldehyde 3-phosphate: step 2/5. In Borrelia turicatae (strain 91E135), this protein is Phosphoglycerate kinase.